The chain runs to 309 residues: ADP-L-glycero-D-manno-heptose-6-epimerase (309 aa).

NADP(+) is bound by residues 10–11, 31–32, Lys-38, Lys-53, 75–79, and Asn-92; these read FI, DN, and LGACS. Residue Tyr-140 is the Proton acceptor of the active site. Residue Lys-144 coordinates NADP(+). Residue Asn-169 participates in substrate binding. Val-170 and Lys-178 together coordinate NADP(+). The active-site Proton acceptor is the Lys-178. Substrate contacts are provided by residues Ser-180, His-187, 201–204, Arg-209, and Tyr-272; that span reads FLGS.

It belongs to the NAD(P)-dependent epimerase/dehydratase family. HldD subfamily. In terms of assembly, homopentamer. NADP(+) serves as cofactor.

The catalysed reaction is ADP-D-glycero-beta-D-manno-heptose = ADP-L-glycero-beta-D-manno-heptose. It participates in nucleotide-sugar biosynthesis; ADP-L-glycero-beta-D-manno-heptose biosynthesis; ADP-L-glycero-beta-D-manno-heptose from D-glycero-beta-D-manno-heptose 7-phosphate: step 4/4. Functionally, catalyzes the interconversion between ADP-D-glycero-beta-D-manno-heptose and ADP-L-glycero-beta-D-manno-heptose via an epimerization at carbon 6 of the heptose. This is ADP-L-glycero-D-manno-heptose-6-epimerase from Hamiltonella defensa subsp. Acyrthosiphon pisum (strain 5AT).